We begin with the raw amino-acid sequence, 572 residues long: RNA polymerase sigma factor sigB (572 aa).

Residues 1–39 (MSSCLLPQFKCPPDSFSIHFRTSFCAPKHNKGSVFFQPQ) constitute a chloroplast transit peptide. Positions 215 to 249 (TRQTERKARRAKGLEKTASGIPSVKTGSSPKKKRL) are disordered. The Polymerase core binding signature appears at 360 to 373 (DLVQEGCRGLVRGA). Positions 530–549 (LQEIGEMMGVSRERVRQIES) form a DNA-binding region, H-T-H motif.

This sequence belongs to the sigma-70 factor family. In terms of tissue distribution, highly expressed in cotyledons, to a lesser extent in leaves, sepals and siliques, and barely expressed in roots. Present in seedlings.

The protein resides in the plastid. It is found in the chloroplast. Required for the transition of plastids into chloroplasts by coordinating nuclear and chloroplastic genomes under light conditions. Sigma factors are initiation factors that promote the attachment of plastid-encoded RNA polymerase (PEP) to specific initiation sites and are then released. Promotes the biosynthesis of plastid-encoded tRNAs (e.g. trnE-UUC and trnV-UAC). This is RNA polymerase sigma factor sigB (SIGB) from Arabidopsis thaliana (Mouse-ear cress).